A 402-amino-acid chain; its full sequence is Phosphoglycerate kinase (402 aa).

Substrate-binding positions include 24–26, arginine 40, 63–66, arginine 122, and arginine 155; these read DFN and HFGR. ATP is bound by residues lysine 206, glycine 297, glutamate 328, and 358–361; that span reads GGDS.

Belongs to the phosphoglycerate kinase family. Monomer.

Its subcellular location is the cytoplasm. The catalysed reaction is (2R)-3-phosphoglycerate + ATP = (2R)-3-phospho-glyceroyl phosphate + ADP. It functions in the pathway carbohydrate degradation; glycolysis; pyruvate from D-glyceraldehyde 3-phosphate: step 2/5. The protein is Phosphoglycerate kinase of Prochlorococcus marinus (strain MIT 9301).